A 102-amino-acid polypeptide reads, in one-letter code: MQSPKIRIRLRAFDYRAIDRSSQEIVETAKRTGAKVHGPIPLPTRIEKFSVNRSVHVNKKSAEQFEIRTHKRLLDIVDPTARTIDELKKLNLPAGVDITIRI.

It belongs to the universal ribosomal protein uS10 family. In terms of assembly, part of the 30S ribosomal subunit.

Involved in the binding of tRNA to the ribosomes. The chain is Small ribosomal subunit protein uS10 from Akkermansia muciniphila (strain ATCC BAA-835 / DSM 22959 / JCM 33894 / BCRC 81048 / CCUG 64013 / CIP 107961 / Muc).